A 155-amino-acid polypeptide reads, in one-letter code: Small ribosomal subunit protein uS9 (155 aa).

It belongs to the universal ribosomal protein uS9 family.

The chain is Small ribosomal subunit protein uS9 from Rhizobium leguminosarum bv. trifolii (strain WSM2304).